We begin with the raw amino-acid sequence, 465 residues long: Hepatocyte nuclear factor 6 (465 aa).

2 disordered regions span residues 15–84 (GVSH…GPLH) and 119–141 (SDKF…HQRL). A compositionally biased stretch (basic residues) spans 123 to 140 (PHHHHHHHHHHHPHHHQR). Positions 283-369 (GSNSGQMEEI…QRMSALRLAA (87 aa)) form a DNA-binding region, CUT. Positions 385–444 (PKKPRLVFTDVQRRTLHAIFKENKRPSKELQITISQQLGLELSTVSNFFMNARRRSLDKW) form a DNA-binding region, homeobox. Positions 442–465 (DKWQDEGSSNSGNSSSSSSTCTKA) are disordered. The span at 448–465 (GSSNSGNSSSSSSTCTKA) shows a compositional bias: low complexity.

Belongs to the CUT homeobox family. Binds DNA as a monomer. As to expression, expressed in liver, brain, spleen and testis.

Its subcellular location is the nucleus. Functionally, transcriptional activator. Binds the consensus sequence 5'-DHWATTGAYTWWD-3' on a variety of gene promoters such as those of HNF3B and TTR. Important for liver genes transcription. The affinity of HNF-6-alpha and HNF-6-beta for DNA differs depending on the target sequence. This Rattus norvegicus (Rat) protein is Hepatocyte nuclear factor 6 (Onecut1).